A 496-amino-acid polypeptide reads, in one-letter code: Squalene epoxidase ERG1 (496 aa).

The Cytoplasmic segment spans residues 1–16 (MSAVNVAPELINADNT). Residues 17 to 37 (ITYDAIVIGAGVIGPCVATGL) form a helical membrane-spanning segment. Residues 28–29 (VI), 48–49 (ER), arginine 56, and arginine 158 contribute to the FAD site. The Lumenal segment spans residues 38 to 474 (ARKGKKVLIV…FLGLPMALLE (437 aa)). Residues lysine 284, lysine 289, and lysine 311 each participate in a glycyl lysine isopeptide (Lys-Gly) (interchain with G-Cter in ubiquitin) cross-link. Residues aspartate 335 and methionine 348 each coordinate FAD. Residues 475-495 (GIMILITAIRVFTPFLFGELI) form a helical membrane-spanning segment. Glycine 496 is a topological domain (cytoplasmic).

It belongs to the squalene monooxygenase family. In terms of assembly, interacts with ERG28. FAD serves as cofactor.

The protein resides in the microsome membrane. Its subcellular location is the endoplasmic reticulum membrane. The protein localises to the lipid droplet. The catalysed reaction is squalene + reduced [NADPH--hemoprotein reductase] + O2 = (S)-2,3-epoxysqualene + oxidized [NADPH--hemoprotein reductase] + H2O + H(+). It functions in the pathway terpene metabolism; lanosterol biosynthesis; lanosterol from farnesyl diphosphate: step 2/3. Inhibited by the allylamine antimycotic drugs. In terms of biological role, squalene epoxidase; part of the third module of ergosterol biosynthesis pathway that includes the late steps of the pathway. ERG1 catalyzes the epoxidation of squalene into 2,3-epoxysqualene. The third module or late pathway involves the ergosterol synthesis itself through consecutive reactions that mainly occur in the endoplasmic reticulum (ER) membrane. Firstly, the squalene synthase ERG9 catalyzes the condensation of 2 farnesyl pyrophosphate moieties to form squalene, which is the precursor of all steroids. Squalene synthase is crucial for balancing the incorporation of farnesyl diphosphate (FPP) into sterol and nonsterol isoprene synthesis. Secondly, the squalene epoxidase ERG1 catalyzes the stereospecific oxidation of squalene to (S)-2,3-epoxysqualene, which is considered to be a rate-limiting enzyme in steroid biosynthesis. Then, the lanosterol synthase ERG7 catalyzes the cyclization of (S)-2,3 oxidosqualene to lanosterol, a reaction that forms the sterol core. In the next steps, lanosterol is transformed to zymosterol through a complex process involving various demethylation, reduction and desaturation reactions. The lanosterol 14-alpha-demethylase ERG11 (also known as CYP51) catalyzes C14-demethylation of lanosterol to produce 4,4'-dimethyl cholesta-8,14,24-triene-3-beta-ol, which is critical for ergosterol biosynthesis. The C-14 reductase ERG24 reduces the C14=C15 double bond of 4,4-dimethyl-cholesta-8,14,24-trienol to produce 4,4-dimethyl-cholesta-8,24-dienol. 4,4-dimethyl-cholesta-8,24-dienol is substrate of the C-4 demethylation complex ERG25-ERG26-ERG27 in which ERG25 catalyzes the three-step monooxygenation required for the demethylation of 4,4-dimethyl and 4alpha-methylsterols, ERG26 catalyzes the oxidative decarboxylation that results in a reduction of the 3-beta-hydroxy group at the C-3 carbon to an oxo group, and ERG27 is responsible for the reduction of the keto group on the C-3. ERG28 has a role as a scaffold to help anchor ERG25, ERG26 and ERG27 to the endoplasmic reticulum and ERG29 regulates the activity of the iron-containing C4-methylsterol oxidase ERG25. Then, the sterol 24-C-methyltransferase ERG6 catalyzes the methyl transfer from S-adenosyl-methionine to the C-24 of zymosterol to form fecosterol. The C-8 sterol isomerase ERG2 catalyzes the reaction which results in unsaturation at C-7 in the B ring of sterols and thus converts fecosterol to episterol. The sterol-C5-desaturase ERG3 then catalyzes the introduction of a C-5 double bond in the B ring to produce 5-dehydroepisterol. The C-22 sterol desaturase ERG5 further converts 5-dehydroepisterol into ergosta-5,7,22,24(28)-tetraen-3beta-ol by forming the C-22(23) double bond in the sterol side chain. Finally, ergosta-5,7,22,24(28)-tetraen-3beta-ol is substrate of the C-24(28) sterol reductase ERG4 to produce ergosterol. In Saccharomyces cerevisiae (strain ATCC 204508 / S288c) (Baker's yeast), this protein is Squalene epoxidase ERG1.